Here is a 340-residue protein sequence, read N- to C-terminus: Heat-inducible transcription repressor HrcA (340 aa).

The protein belongs to the HrcA family.

Functionally, negative regulator of class I heat shock genes (grpE-dnaK-dnaJ and groELS operons). Prevents heat-shock induction of these operons. The polypeptide is Heat-inducible transcription repressor HrcA (Mycoplasmopsis synoviae (strain 53) (Mycoplasma synoviae)).